Consider the following 334-residue polypeptide: Gap junction alpha-2 protein (334 aa).

Over 1–12 (MAGWELLKLLLD) the chain is Cytoplasmic. The helical transmembrane segment at 13-35 (DVQEHSTLIGKVWLTVLFIFRIF) threads the bilayer. Residues 36-75 (ILSVAGESVWTDEQSDFICNTQQPGCTNVCYDQAFPISHV) are Extracellular-facing. The helical transmembrane segment at 76–98 (RYWVLQFLFVSTPTLIYLGHMVY) threads the bilayer. The Cytoplasmic segment spans residues 99–153 (LSKKEEKERQKENESRILVANEAQTEVHSSATKKIRIQGPLMCTYTTSVVFKSIF). Residues 154–176 (EAGFLLGQWYIYGFVMSPIFVCE) traverse the membrane as a helical segment. The Extracellular segment spans residues 177 to 207 (RIPCKHKVECFVSRPMEKTIFIIFMLVVSLI). A helical transmembrane segment spans residues 208–230 (SLLLNLMELIHLSFKCFQHGIKE). The Cytoplasmic segment spans residues 231 to 334 (GATCSPTGIP…HQTSSKQQYV (104 aa)).

The protein belongs to the connexin family. Alpha-type (group II) subfamily. As to quaternary structure, a connexon is composed of a hexamer of connexins. As to expression, resides primarily in the ovary, oocytes and early embryos.

The protein resides in the cell membrane. It is found in the cell junction. The protein localises to the gap junction. Functionally, one gap junction consists of a cluster of closely packed pairs of transmembrane channels, the connexons, through which materials of low MW diffuse from one cell to a neighboring cell. The chain is Gap junction alpha-2 protein (gja2) from Xenopus laevis (African clawed frog).